Here is a 496-residue protein sequence, read N- to C-terminus: WD repeat-containing protein 37 (496 aa).

2 stretches are compositionally biased toward polar residues: residues 1 to 13 (MPTE…TARQ) and 22 to 31 (SLSIRRTNSS). Positions 1-50 (MPTESGSCSTARQAKQKRKSHSLSIRRTNSSEQERTGLPREMLEGQDSKL) are disordered. Residues 32 to 47 (EQERTGLPREMLEGQD) are compositionally biased toward basic and acidic residues. WD repeat units lie at residues 154-194 (GHRD…CLVK) and 197-236 (GHVG…PTPQ). The interval 238–267 (VADTSQQISGEDEIECSDKDEPDIDGDVSS) is disordered. Acidic residues predominate over residues 247–265 (GEDEIECSDKDEPDIDGDV). WD repeat units lie at residues 281-320 (SHQG…LVHS), 323-362 (GHDQ…IHSV), 367-405 (GHTD…SPIA), 408-447 (RTDS…LARL), and 454-495 (GHRR…LLQE).

In terms of assembly, forms homodimers. Interacts with PACS1. Interacts with PACS2.

It is found in the cytoplasm. Its subcellular location is the nucleus. Required for normal ER Ca2+ handling in lymphocytes. Together with PACS1, it plays an essential role in stabilizing peripheral lymphocyte populations. The polypeptide is WD repeat-containing protein 37 (Wdr37) (Mus musculus (Mouse)).